A 197-amino-acid chain; its full sequence is Holliday junction branch migration complex subunit RuvA (197 aa).

The tract at residues 1 to 64 (MYEYIKGKYI…EDFIGIYGFL (64 aa)) is domain I. Residues 65–143 (TKDELSMFKL…IDISEEDDEQ (79 aa)) form a domain II region. Residues 144 to 148 (IINKV) form a flexible linker region. A domain III region spans residues 149–197 (TDDKKVLEAVAALVTLGYSEKEASKVINLCDKNNSLEQIIKEALKHLMK).

Belongs to the RuvA family. Homotetramer. Forms an RuvA(8)-RuvB(12)-Holliday junction (HJ) complex. HJ DNA is sandwiched between 2 RuvA tetramers; dsDNA enters through RuvA and exits via RuvB. An RuvB hexamer assembles on each DNA strand where it exits the tetramer. Each RuvB hexamer is contacted by two RuvA subunits (via domain III) on 2 adjacent RuvB subunits; this complex drives branch migration. In the full resolvosome a probable DNA-RuvA(4)-RuvB(12)-RuvC(2) complex forms which resolves the HJ.

Its subcellular location is the cytoplasm. In terms of biological role, the RuvA-RuvB-RuvC complex processes Holliday junction (HJ) DNA during genetic recombination and DNA repair, while the RuvA-RuvB complex plays an important role in the rescue of blocked DNA replication forks via replication fork reversal (RFR). RuvA specifically binds to HJ cruciform DNA, conferring on it an open structure. The RuvB hexamer acts as an ATP-dependent pump, pulling dsDNA into and through the RuvAB complex. HJ branch migration allows RuvC to scan DNA until it finds its consensus sequence, where it cleaves and resolves the cruciform DNA. The polypeptide is Holliday junction branch migration complex subunit RuvA (Clostridium botulinum (strain Loch Maree / Type A3)).